The sequence spans 485 residues: Serine/threonine-protein kinase 4 (485 aa).

The Protein kinase domain maps to 30-281 (FDVLEKLGEG…ATELLQHPFI (252 aa)). ATP-binding positions include 36 to 44 (LGEGSYGSV) and Lys-59. The Proton acceptor role is filled by Asp-149. The residue at position 183 (Thr-183) is a Phosphothreonine; by autocatalysis. A coiled-coil region spans residues 287 to 313 (ESILRHLINEAQDAKLKRTELKQREVE). The region spanning 431 to 478 (YSFLKDWSVTELQLRLNSLDPMMEQEIEEIHHKYQAKRQPILEAIESK) is the SARAH domain.

The protein belongs to the protein kinase superfamily. STE Ser/Thr protein kinase family. STE20 subfamily. In terms of assembly, homodimer; mediated via the coiled-coil region. Requires Mg(2+) as cofactor. In terms of processing, autophosphorylated on Thr-183. Post-translationally, proteolytically cleaved by caspase-3 during apoptosis at Asp-326 resulting in a 37 kDa form. Proteolytic cleavage results in kinase activation and nuclear translocation of the truncated form (MST1/N).

The protein localises to the cytoplasm. It is found in the nucleus. It carries out the reaction L-seryl-[protein] + ATP = O-phospho-L-seryl-[protein] + ADP + H(+). The enzyme catalyses L-threonyl-[protein] + ATP = O-phospho-L-threonyl-[protein] + ADP + H(+). With respect to regulation, the C-terminal non-catalytic region inhibits the kinase activity, the enzyme is activated by caspase-cleavage. Homodimerization and autophosphorylation of Thr-183 is also required for full activation. Stress-activated, pro-apoptotic kinase which, following caspase-cleavage, enters the nucleus and induces chromatin condensation followed by internucleosomal DNA fragmentation. Key component of the Hippo signaling pathway which plays a pivotal role in organ size control and tumor suppression by restricting proliferation and promoting apoptosis. The core of this pathway is composed of a kinase cascade wherein stk3/mst2 and stk4/mst1, in complex with its regulatory protein sav1, phosphorylates and activates lats1/2 in complex with its regulatory protein mob1, which in turn phosphorylates and inactivates yap1 oncoprotein and wwtr1/taz. Phosphorylation of yap1 by lats2 inhibits its translocation into the nucleus to regulate cellular genes important for cell proliferation, cell death, and cell migration. Phosphorylates 'Ser-14' of histone H2B (H2BS14ph) during apoptosis. The sequence is that of Serine/threonine-protein kinase 4 (stk4) from Xenopus tropicalis (Western clawed frog).